Here is a 356-residue protein sequence, read N- to C-terminus: Probable cytosolic iron-sulfur protein assembly protein 1 (356 aa).

WD repeat units follow at residues Gly-34 to Glu-73, Gly-89 to Cys-128, Glu-134 to Cys-173, Ala-179 to Glu-218, His-244 to Arg-291, and Ala-319 to Thr-356.

Belongs to the WD repeat CIA1 family.

Functionally, essential component of the cytosolic iron-sulfur (Fe/S) protein assembly machinery. Required for the maturation of extramitochondrial Fe/S proteins. This is Probable cytosolic iron-sulfur protein assembly protein 1 from Malassezia globosa (strain ATCC MYA-4612 / CBS 7966) (Dandruff-associated fungus).